The following is a 314-amino-acid chain: Olfactory receptor 5G9 (314 aa).

At 1–25 (MADENYTRITEFIFIGLRYHPNLQV) the chain is on the extracellular side. An N-linked (GlcNAc...) asparagine glycan is attached at Asn-5. The chain crosses the membrane as a helical span at residues 26 to 46 (FLFLLFLLFYLVTMTGNLGMI). At 47 to 54 (ILIRVDSR) the chain is on the cytoplasmic side. A helical membrane pass occupies residues 55-75 (LHTPMYFFLSHLSFVDICFSS). Residues 76 to 99 (VVAPKMLTDFFADKKAISFLGCVL) lie on the Extracellular side of the membrane. Cys-97 and Cys-189 are joined by a disulfide. Residues 100–120 (QQWFFGFFVAIECLLLASMAY) form a helical membrane-spanning segment. Residues 121–133 (DRYVAICNPLLYS) lie on the Cytoplasmic side of the membrane. The helical transmembrane segment at 134-154 (VAMSQRLCIQLVIGPYAVGFF) threads the bilayer. Topologically, residues 155-196 (NTMTHTTAAFRLPFCGSNIINHFFCDMSPILSLICADIRINK) are extracellular. Residues 197–217 (LLVFIVAGAVLIVSSTTIIVS) form a helical membrane-spanning segment. Topologically, residues 218-237 (YFHILIAILRIRSAEGRRKA) are cytoplasmic. The helical transmembrane segment at 238–258 (FSTCSSHVTAVSILYGTLFFI) threads the bilayer. Topologically, residues 259–271 (YVRPSAISSLDLN) are extracellular. Residues 272-292 (KVVSVFYTAVIPMLNPLIYSL) form a helical membrane-spanning segment. At 293–314 (RNKEVKSAMGRTVAKAKVFLKN) the chain is on the cytoplasmic side.

Belongs to the G-protein coupled receptor 1 family.

It localises to the cell membrane. In terms of biological role, potential odorant receptor. This is Olfactory receptor 5G9 from Mus musculus (Mouse).